The primary structure comprises 194 residues: IMP cyclohydrolase (194 aa).

It belongs to the archaeal IMP cyclohydrolase family.

The enzyme catalyses IMP + H2O = 5-formamido-1-(5-phospho-D-ribosyl)imidazole-4-carboxamide. It participates in purine metabolism; IMP biosynthesis via de novo pathway; IMP from 5-formamido-1-(5-phospho-D-ribosyl)imidazole-4-carboxamide: step 1/1. Its function is as follows. Catalyzes the cyclization of 5-formylamidoimidazole-4-carboxamide ribonucleotide to IMP. This Halobacterium salinarum (strain ATCC 29341 / DSM 671 / R1) protein is IMP cyclohydrolase.